Reading from the N-terminus, the 362-residue chain is LILFFCLAQLWGCRAVPHGPILGYREPACDDVETEQAALAAVDYINKHLPRGYKHTLNQVDSVKVWPRRPAGEVFDIEIDTLETTCHVLDPTPLANCSVRQLTEHAVEGDCDFHVLKQDGQFSVLFAKCDSSPDSAEDVHKVCPNCPLLAPLNDSRVVHAAESALAAFNAQSNGSYLQLVEISRAQLVPLSASVSVEFAVAVTDCVAKEAYSPTKCNLLVEKQYGFCKGTVTAKVNEEDVAVTCTVFQTQPVVLQPQPAGADAGATPVVDAAATASPLADVPAASLVVGPMVVAVPPGIPPVHRSHYDLRHSFSGVASVESASGEAFHVGKTPKGAQPSIPAADGSVPVVRPCPGRIRHFKI.

A signal peptide spans 1 to 15 (LILFFCLAQLWGCRA). A Cystatin fetuin-A-type 1 domain is found at 24–130 (YREPACDDVE…QFSVLFAKCD (107 aa)). 6 cysteine pairs are disulfide-bonded: C29-C353, C86-C97, C111-C129, C143-C146, C205-C216, and C227-C244. The N-linked (GlcNAc...) asparagine glycan is linked to N96. A phosphoserine mark is found at S131, S132, and S135. The region spanning 141-252 (KVCPNCPLLA…TCTVFQTQPV (112 aa)) is the Cystatin fetuin-A-type 2 domain. N-linked (GlcNAc...) asparagine glycans are attached at residues N153 and N173. Residues S314, S318, S321, and S323 each carry the phosphoserine modification. Residue T332 is glycosylated (O-linked (GalNAc...) threonine).

This sequence belongs to the fetuin family. Phosphorylated by FAM20C in the extracellular medium. Expressed by the liver and secreted in plasma.

It localises to the secreted. In Sus scrofa (Pig), this protein is Alpha-2-HS-glycoprotein (AHSG).